Consider the following 292-residue polypeptide: Phosphatidylglycerol--prolipoprotein diacylglyceryl transferase (292 aa).

The next 4 membrane-spanning stretches (helical) occupy residues 18–38 (LFGA…GLLI), 67–87 (LLTW…VLFY), 105–125 (GGMS…AFCL), and 129–149 (ISIL…LFLG). Arg150 lines the a 1,2-diacyl-sn-glycero-3-phospho-(1'-sn-glycerol) pocket. The next 3 helical transmembrane spans lie at 193-213 (QLYE…ILIW), 222-242 (GAVT…VEFV), and 266-286 (GLTM…YFML).

It belongs to the Lgt family.

Its subcellular location is the cell inner membrane. The enzyme catalyses L-cysteinyl-[prolipoprotein] + a 1,2-diacyl-sn-glycero-3-phospho-(1'-sn-glycerol) = an S-1,2-diacyl-sn-glyceryl-L-cysteinyl-[prolipoprotein] + sn-glycerol 1-phosphate + H(+). It participates in protein modification; lipoprotein biosynthesis (diacylglyceryl transfer). Its function is as follows. Catalyzes the transfer of the diacylglyceryl group from phosphatidylglycerol to the sulfhydryl group of the N-terminal cysteine of a prolipoprotein, the first step in the formation of mature lipoproteins. The protein is Phosphatidylglycerol--prolipoprotein diacylglyceryl transferase of Cereibacter sphaeroides (strain ATCC 17025 / ATH 2.4.3) (Rhodobacter sphaeroides).